The following is a 1132-amino-acid chain: Phosphatidylinositide phosphatase SAC2 (1132 aa).

In terms of domain architecture, SAC spans 167–518; that stretch reads LKMFMDSESF…GDSISRQYAG (352 aa). Residues 593–760 form the hSac2 domain; it reads RSHQELISQL…KSSKPHEDII (168 aa). Residues S827 and S830 each carry the phosphoserine modification. The disordered stretch occupies residues 846 to 875; it reads ESDGDMSSDNDSYHSDEFLTNSKSDEDRQL. Positions 856 to 874 are enriched in basic and acidic residues; that stretch reads DSYHSDEFLTNSKSDEDRQ. 4 positions are modified to phosphoserine: S878, S881, S907, and S910. Disordered regions lie at residues 923–942 and 974–1017; these read VAHGSGLGKGQESPLKKSPS and LSET…LDVS. At S1103 the chain carries Phosphoserine.

In terms of assembly, homodimer. Interacts with OCRL and RAB5A. Interacts with INPP5B and INPP4A. Interacts with STAT3; the interaction is independent of STAT3 'Tyr-705' phosphorylation status. Ubiquitous. Highly expressed in brain.

The protein localises to the membrane. It localises to the clathrin-coated pit. It is found in the early endosome. The protein resides in the recycling endosome. The catalysed reaction is a myo-inositol phosphate + H2O = myo-inositol + phosphate. Its function is as follows. Inositol 4-phosphatase which mainly acts on phosphatidylinositol 4-phosphate. May be functionally linked to OCRL, which converts phosphatidylinositol 4,5-bisphosphate to phosphatidylinositol, for a sequential dephosphorylation of phosphatidylinositol 4,5-bisphosphate at the 5 and 4 position of inositol, thus playing an important role in the endocytic recycling. Regulator of TF:TFRC and integrins recycling pathway, is also involved in cell migration mechanisms. Modulates AKT/GSK3B pathway by decreasing AKT and GSK3B phosphorylation. Negatively regulates STAT3 signaling pathway through inhibition of STAT3 phosphorylation and translocation to the nucleus. Functionally important modulator of cardiac myocyte size and of the cardiac response to stress. May play a role as negative regulator of axon regeneration after central nervous system injuries. This chain is Phosphatidylinositide phosphatase SAC2, found in Homo sapiens (Human).